A 121-amino-acid polypeptide reads, in one-letter code: Aspartate 1-decarboxylase (121 aa).

The Schiff-base intermediate with substrate; via pyruvic acid role is filled by serine 25. At serine 25 the chain carries Pyruvic acid (Ser). Threonine 57 serves as a coordination point for substrate. Tyrosine 58 (proton donor) is an active-site residue. A substrate-binding site is contributed by 73–75 (GAA).

It belongs to the PanD family. Heterooctamer of four alpha and four beta subunits. It depends on pyruvate as a cofactor. Post-translationally, is synthesized initially as an inactive proenzyme, which is activated by self-cleavage at a specific serine bond to produce a beta-subunit with a hydroxyl group at its C-terminus and an alpha-subunit with a pyruvoyl group at its N-terminus.

Its subcellular location is the cytoplasm. The catalysed reaction is L-aspartate + H(+) = beta-alanine + CO2. It functions in the pathway cofactor biosynthesis; (R)-pantothenate biosynthesis; beta-alanine from L-aspartate: step 1/1. Catalyzes the pyruvoyl-dependent decarboxylation of aspartate to produce beta-alanine. In Sulfurimonas denitrificans (strain ATCC 33889 / DSM 1251) (Thiomicrospira denitrificans (strain ATCC 33889 / DSM 1251)), this protein is Aspartate 1-decarboxylase.